The following is a 957-amino-acid chain: Collagen alpha-1(XXI) chain (957 aa).

Positions 1–16 are cleaved as a signal peptide; the sequence is MPGIIYILCSILLIES. A VWFA domain is found at 37 to 211; that stretch reads DLVFILDGSW…RIREIMKQKL (175 aa). Residues 230 to 412 enclose the Laminin G-like domain; sequence GFDILLGLGI…LQKLRIYCDP (183 aa). 2 disordered regions span residues 441–788 and 820–935; these read PAPC…GKEQ and CKTQ…DAGI. 8 consecutive Collagen-like domains span residues 448 to 501, 502 to 543, 544 to 591, 592 to 642, 643 to 684, 685 to 741, 742 to 786, and 825 to 882; these read PGEK…PRGF, AGLK…DKGD, IGID…EEGK, PGPP…ISGP, EGIS…IPGQ, QGYT…EIGE, HGHR…QQGK, and GSPG…GNKG. Residues 483-498 show a composition bias toward low complexity; it reads TSGSPGIPGSPGVQGP. Residues 535-556 show a composition bias toward basic and acidic residues; that stretch reads MGPKGDKGDIGIDGKKGTKGDK. Low complexity-rich tracts occupy residues 597–616 and 633–649; these read MEGL…DGAN and PTGT…SGPQ. Over residues 733-744 the composition is skewed to basic and acidic residues; sequence KGEKGEIGEHGH. Low complexity predominate over residues 775–786; the sequence is QGLPGPKGQQGK.

It belongs to the fibril-associated collagens with interrupted helices (FACIT) family.

The protein localises to the secreted. It is found in the extracellular space. The protein resides in the extracellular matrix. It localises to the cytoplasm. The sequence is that of Collagen alpha-1(XXI) chain (col21a1) from Xenopus laevis (African clawed frog).